The sequence spans 460 residues: Oxysterols receptor LXR-beta (460 aa).

Residues 1–14 (MSSPTTSSLDTPLP) show a composition bias toward low complexity. Residues 1–78 (MSSPTTSSLD…PERKRKKGPA (78 aa)) are disordered. The transactivation AF-1; required for ligand-independent transactivation function stretch occupies residues 1-85 (MSSPTTSSLD…GPAPKMLGHE (85 aa)). A compositionally biased stretch (pro residues) spans 36–45 (EPWPGGPDPD). The nuclear receptor DNA-binding region spans 84–161 (HELCRVCGDK…AGMREQCVLS (78 aa)). 2 NR C4-type zinc fingers span residues 87 to 107 (CRVC…CEGC) and 125 to 149 (CRGG…LRKC). The segment at 169-216 (KIRKQQQESQSQSQSPVGPQGSSSSASGPGASPGGSEAGSQGSGEGEG) is disordered. The span at 175 to 198 (QESQSQSQSPVGPQGSSSSASGPG) shows a compositional bias: low complexity. The segment covering 199–215 (ASPGGSEAGSQGSGEGE) has biased composition (gly residues). The tract at residues 219-460 (LTAAQELMIQ…LLSEIWDVHE (242 aa)) is transactivation AF-2; required for ligand-dependent transactivation function; mediates interaction with CCAR2. The NR LBD domain occupies 222 to 460 (AQELMIQQLV…LLSEIWDVHE (239 aa)). Residues lysine 409 and lysine 447 each participate in a glycyl lysine isopeptide (Lys-Gly) (interchain with G-Cter in SUMO2) cross-link.

The protein belongs to the nuclear hormone receptor family. NR1 subfamily. Forms a heterodimer with RXR. Interacts with CCAR2 (via N-terminus) in a ligand-independent manner. Interacts (when sumoylated) with GPS2; interaction with GPS2 onto hepatic acute phase protein promoters prevents N-Cor corepressor complex dissociation. Interacts with ABCA12 and ABCA1; this interaction is required for ABCA1 localization to the cell surface and is necessary for its normal activity and stability. Sumoylated by SUMO2 at Lys-409 and Lys-447 during the hepatic acute phase response, leading to promote interaction with GPS2 and prevent N-Cor corepressor complex dissociation. In terms of tissue distribution, ubiquitous.

Its subcellular location is the nucleus. Its function is as follows. Nuclear receptor that exhibits a ligand-dependent transcriptional activation activity. Binds preferentially to double-stranded oligonucleotide direct repeats having the consensus half-site sequence 5'-AGGTCA-3' and 4-nt spacing (DR-4). Regulates cholesterol uptake through MYLIP-dependent ubiquitination of LDLR, VLDLR and LRP8; DLDLR and LRP8. Interplays functionally with RORA for the regulation of genes involved in liver metabolism. Induces LPCAT3-dependent phospholipid remodeling in endoplasmic reticulum (ER) membranes of hepatocytes, driving SREBF1 processing and lipogenesis. Via LPCAT3, triggers the incorporation of arachidonate into phosphatidylcholines of ER membranes, increasing membrane dynamics and enabling triacylglycerols transfer to nascent very low-density lipoprotein (VLDL) particles. Via LPCAT3 also counteracts lipid-induced ER stress response and inflammation, likely by modulating SRC kinase membrane compartmentalization and limiting the synthesis of lipid inflammatory mediators. Plays an anti-inflammatory role during the hepatic acute phase response by acting as a corepressor: inhibits the hepatic acute phase response by preventing dissociation of the N-Cor corepressor complex. The protein is Oxysterols receptor LXR-beta (NR1H2) of Homo sapiens (Human).